The primary structure comprises 624 residues: Threonine--tRNA ligase (624 aa).

The tract at residues 1–143 (MRLLFIHADE…SRTVTPEAAE (143 aa)) is editing domain. The interval 197–499 (AHVKLMREKE…EQEGKLPTLP (303 aa)) is catalytic. Positions 289, 340, and 467 each coordinate Zn(2+). Residues 598-624 (LERETEGKPRVPLTIPDRLSRRPRFGR) are disordered.

It belongs to the class-II aminoacyl-tRNA synthetase family. In terms of assembly, homodimer. Zn(2+) is required as a cofactor.

Its subcellular location is the cytoplasm. The catalysed reaction is tRNA(Thr) + L-threonine + ATP = L-threonyl-tRNA(Thr) + AMP + diphosphate + H(+). In terms of biological role, catalyzes the attachment of threonine to tRNA(Thr) in a two-step reaction: L-threonine is first activated by ATP to form Thr-AMP and then transferred to the acceptor end of tRNA(Thr). Also edits incorrectly charged L-seryl-tRNA(Thr). The sequence is that of Threonine--tRNA ligase from Methanopyrus kandleri (strain AV19 / DSM 6324 / JCM 9639 / NBRC 100938).